Reading from the N-terminus, the 136-residue chain is Diuretic hormone 41 (136 aa).

The N-terminal stretch at 1-26 (MMWWAVWCAAMVAGSVFTAAAPPTDS) is a signal peptide. A propeptide spanning residues 27–76 (IDLMQMDPSLADDESLGFAMQSLSGRYAAAPWLYLLADVSHDPQNGSDRV) is cleaved from the precursor. I119 carries the isoleucine amide modification. A propeptide spanning residues 123-136 (GFHWAPSAKAAKFY) is cleaved from the precursor.

It belongs to the sauvagine/corticotropin-releasing factor/urotensin I family.

Its subcellular location is the secreted. In terms of biological role, regulation of fluid secretion. The sequence is that of Diuretic hormone 41 (dh41) from Bombyx mori (Silk moth).